The chain runs to 32 residues: Alcohol dehydrogenase-related 31 kDa protein (32 aa).

Residue 11-32 coordinates NAD(+); that stretch reads YVADCGGIALETSXVLMTKNIA.

Belongs to the short-chain dehydrogenases/reductases (SDR) family.

This chain is Alcohol dehydrogenase-related 31 kDa protein (Adhr), found in Drosophila yakuba (Fruit fly).